Reading from the N-terminus, the 200-residue chain is ATP synthase subunit b 1 (200 aa).

Residues 14-34 (AAVIVVVSLMAFCCAGFAVAA) traverse the membrane as a helical segment.

It belongs to the ATPase B chain family. In terms of assembly, F-type ATPases have 2 components, F(1) - the catalytic core - and F(0) - the membrane proton channel. F(1) has five subunits: alpha(3), beta(3), gamma(1), delta(1), epsilon(1). F(0) has three main subunits: a(1), b(2) and c(10-14). The alpha and beta chains form an alternating ring which encloses part of the gamma chain. F(1) is attached to F(0) by a central stalk formed by the gamma and epsilon chains, while a peripheral stalk is formed by the delta and b chains.

It is found in the cell inner membrane. Its function is as follows. F(1)F(0) ATP synthase produces ATP from ADP in the presence of a proton or sodium gradient. F-type ATPases consist of two structural domains, F(1) containing the extramembraneous catalytic core and F(0) containing the membrane proton channel, linked together by a central stalk and a peripheral stalk. During catalysis, ATP synthesis in the catalytic domain of F(1) is coupled via a rotary mechanism of the central stalk subunits to proton translocation. In terms of biological role, component of the F(0) channel, it forms part of the peripheral stalk, linking F(1) to F(0). This is ATP synthase subunit b 1 from Desulfosudis oleivorans (strain DSM 6200 / JCM 39069 / Hxd3) (Desulfococcus oleovorans).